Reading from the N-terminus, the 386-residue chain is MKFVDEASILVVAGDGGNGCVSFRREKYIPKGGPDGGDGGDGGDVWMEADENLNTLIDYRFEKSFRAERGQNGASRDCTGKRGKDVTIKVPVGTRVIDQGTGETMGDMTKHGQRLLVAKGGWHGLGNTRFKSSVNRTPRQKTNGTPGDKRELLLELMLLADVGMLGMPNAGKSTFIRAVSAAKPKVADYPFTTLVPSLGVVRMDNEKSFVVADIPGLIEGAAEGAGLGIRFLKHLERCRVLLHLIDIDPIDGTDPVENARIIISELEKYSQDLAAKPRWLVFNKIDLLDKVEAEEKAKAIAEALGWEDKYYLISAASGLGVKDLCWDVMTFIIENPVVQAEEAKQPEKVEFMWDDYHRQQLEEIAEEDDEDWDEDDEEGVEFIYKR.

The 159-residue stretch at 1-159 (MKFVDEASIL…RELLLELMLL (159 aa)) folds into the Obg domain. The disordered stretch occupies residues 127–147 (NTRFKSSVNRTPRQKTNGTPG). Over residues 129 to 145 (RFKSSVNRTPRQKTNGT) the composition is skewed to polar residues. In terms of domain architecture, OBG-type G spans 160-333 (ADVGMLGMPN…LCWDVMTFII (174 aa)). GTP-binding positions include 166 to 173 (GMPNAGKS), 191 to 195 (FTTLV), 213 to 216 (DIPG), 283 to 286 (NKID), and 314 to 316 (SAA). S173 and T193 together coordinate Mg(2+).

The protein belongs to the TRAFAC class OBG-HflX-like GTPase superfamily. OBG GTPase family. In terms of assembly, monomer. Mg(2+) is required as a cofactor.

The protein localises to the cytoplasm. In terms of biological role, an essential GTPase which binds GTP, GDP and possibly (p)ppGpp with moderate affinity, with high nucleotide exchange rates and a fairly low GTP hydrolysis rate. Plays a role in control of the cell cycle, stress response, ribosome biogenesis and in those bacteria that undergo differentiation, in morphogenesis control. This chain is GTPase Obg, found in Escherichia coli (strain UTI89 / UPEC).